A 428-amino-acid chain; its full sequence is Transcription factor bHLH91 (428 aa).

The bHLH domain occupies 210-259 (KRKNKPFTTERERRCHLNERYEALKLLIPSPSKGDRASILQDGIDYINEL). The segment at 278–320 (RHKNNEVDDNNNNKNLDDHGNEDDDDDDENMEKKPESDVIDQC) is disordered. The segment covering 297–307 (GNEDDDDDDEN) has biased composition (acidic residues).

As to quaternary structure, homodimer. Flowers.

The protein localises to the nucleus. The chain is Transcription factor bHLH91 (BHLH91) from Arabidopsis thaliana (Mouse-ear cress).